A 181-amino-acid polypeptide reads, in one-letter code: MENTQENPATQSAEDIGSEKQAAQGAAPAAEAADAALAEAQAKVAELQESYLRAKAETENVRRRAQDDVSKAHKFAIEGFAEHLLPVLDSLEAAVNDTSGDITKVREGVELTLRQLTNALEKGRVVALNPVGEKFDPHQHQAISMVPAEQEPNTVVTVLQKGYTIADRVLRPALVTVAQPK.

Polar residues predominate over residues 1–13 (MENTQENPATQSA). The tract at residues 1 to 39 (MENTQENPATQSAEDIGSEKQAAQGAAPAAEAADAALAE) is disordered. Positions 21 to 39 (QAAQGAAPAAEAADAALAE) are enriched in low complexity.

The protein belongs to the GrpE family. Homodimer.

It is found in the cytoplasm. Its function is as follows. Participates actively in the response to hyperosmotic and heat shock by preventing the aggregation of stress-denatured proteins, in association with DnaK and GrpE. It is the nucleotide exchange factor for DnaK and may function as a thermosensor. Unfolded proteins bind initially to DnaJ; upon interaction with the DnaJ-bound protein, DnaK hydrolyzes its bound ATP, resulting in the formation of a stable complex. GrpE releases ADP from DnaK; ATP binding to DnaK triggers the release of the substrate protein, thus completing the reaction cycle. Several rounds of ATP-dependent interactions between DnaJ, DnaK and GrpE are required for fully efficient folding. This is Protein GrpE from Burkholderia lata (strain ATCC 17760 / DSM 23089 / LMG 22485 / NCIMB 9086 / R18194 / 383).